Consider the following 329-residue polypeptide: Secretory carrier-associated membrane protein 2 (329 aa).

The segment at 1–74 (MSAFDTNPFA…PSVEPAQPTP (74 aa)) is disordered. Residues 1–153 (MSAFDTNPFA…DYQRICKMLY (153 aa)) are Cytoplasmic-facing. Composition is skewed to polar residues over residues 19 to 31 (QDPSVTQLTNAPQ) and 40 to 51 (FSETNAATTVPA). The helical transmembrane segment at 154-174 (YLWMLHSVTLFLNLLACLAWF) threads the bilayer. At 175-181 (TSDAANG) the chain is on the lumenal side. The chain crosses the membrane as a helical span at residues 182–202 (TAFGLSILWFLIFTPCAFLCW). At 203 to 218 (YRPIYKAFRSDNSFSF) the chain is on the cytoplasmic side. The interaction with SLC9A7 stretch occupies residues 203–218 (YRPIYKAFRSDNSFSF). Residues 219–239 (FVFFFVFFCQIGIYFIQLIGL) form a helical membrane-spanning segment. At 240-262 (PNLGTSGWLAALSTMKNGPLAVT) the chain is on the lumenal side. The chain crosses the membrane as a helical span at residues 263–283 (IIMMVVAGFFTLCAGLSLFLL). The Cytoplasmic portion of the chain corresponds to 284–329 (QRVHAFYRRTGASFQQAQEEFSQGIFSSRTFRGAASSAARGAFQGN). Residues Ser319 and Ser320 each carry the phosphoserine modification.

The protein belongs to the SCAMP family. As to quaternary structure, interacts with SLC6A4 and SLC9A7. Interacts with SLC9A5; this interaction regulates SLC9A5 cell-surface targeting and SLC9A5 activity.

Its subcellular location is the golgi apparatus. The protein resides in the trans-Golgi network membrane. The protein localises to the recycling endosome membrane. Functions in post-Golgi recycling pathways. Acts as a recycling carrier to the cell surface. The protein is Secretory carrier-associated membrane protein 2 (Scamp2) of Mus musculus (Mouse).